The sequence spans 255 residues: SLA class II histocompatibility antigen, DQ haplotype D alpha chain (255 aa).

Positions 1–23 (MVPGRVLMWGALALTAVMSACGG) are cleaved as a signal peptide. An alpha-1 region spans residues 24-120 (EDIAADHVAS…QVPEVTVFPK (97 aa)). Residues 24–217 (EDIAADHVAS…IPAPMSELTE (194 aa)) lie on the Extracellular side of the membrane. N104 and N144 each carry an N-linked (GlcNAc...) asparagine glycan. Residues 113–205 (PEVTVFPKSP…LDKPLLKHWE (93 aa)) form the Ig-like C1-type domain. Positions 121 to 204 (SPVMLGQPNT…GLDKPLLKHW (84 aa)) are alpha-2. The cysteines at positions 133 and 189 are disulfide-linked. Residues 205-217 (EPEIPAPMSELTE) are connecting peptide. A helical membrane pass occupies residues 218–240 (TVVCALGLIVGLVGIVVGTVFII). Topologically, residues 241–255 (QGLRSGGPSRHQGSL) are cytoplasmic.

It belongs to the MHC class II family.

The protein localises to the membrane. The protein is SLA class II histocompatibility antigen, DQ haplotype D alpha chain of Sus scrofa (Pig).